Reading from the N-terminus, the 641-residue chain is Methylenetetrahydrofolate reductase 2 (641 aa).

E20 functions as the Proton donor/acceptor in the catalytic mechanism. Residues 20-25 (EYFPPK) and 52-53 (TW) contribute to the NAD(+) site. Residues 52–53 (TW), H81, 111–113 (RGD), Y153, D172, and K179 each bind FAD. D113 contributes to the substrate binding site. Substrate is bound at residue Q190.

This sequence belongs to the methylenetetrahydrofolate reductase family. FAD is required as a cofactor.

The enzyme catalyses (6S)-5-methyl-5,6,7,8-tetrahydrofolate + NADP(+) = (6R)-5,10-methylene-5,6,7,8-tetrahydrofolate + NADPH + H(+). Its pathway is one-carbon metabolism; tetrahydrofolate interconversion. Its function is as follows. Major methylenetetrahydrofolate reductase required to generate the methyl groups necessary for methionine synthetase to convert homocysteine to methionine. Performs 15 to 20 percent of the total methylenetetrahydrofolate reductase activity of the cells. This Schizosaccharomyces pombe (strain 972 / ATCC 24843) (Fission yeast) protein is Methylenetetrahydrofolate reductase 2 (met11).